We begin with the raw amino-acid sequence, 479 residues long: Beta-amyrin 28-monooxygenase (479 aa).

Residues 5 to 25 (FYLSLLLLFVTFISLSLFFIF) form a helical membrane-spanning segment. C426 is a binding site for heme.

It belongs to the cytochrome P450 family. The cofactor is heme. In terms of tissue distribution, expressed in roots, nodules and flowers.

The protein resides in the membrane. It carries out the reaction beta-amyrin + 3 reduced [NADPH--hemoprotein reductase] + 3 O2 = oleanolate + 3 oxidized [NADPH--hemoprotein reductase] + 4 H2O + 4 H(+). Its function is as follows. Catalyzes the carboxylation of beta-amyrin at the C-28 position to form oleanolic acid. Involved in an early step in the hemolytic saponin biosynthetic pathway. Catalyzes the carboxylation of alpha-amyrin and lupeol at the C-28 position to form ursolic acid and betulinic acid respectively. This Medicago truncatula (Barrel medic) protein is Beta-amyrin 28-monooxygenase.